The chain runs to 192 residues: ADP-ribose glycohydrolase AF_1521 (192 aa).

Residues 1 to 192 (MEVLFEAKVG…VALKVFERSL (192 aa)) enclose the Macro domain. Residues 19–21 (GDI), 32–34 (AAN), 39–44 (HGGGVA), and 140–146 (VSAGIYG) each bind substrate.

The enzyme catalyses 5-O-(ADP-D-ribosyl)-L-glutamyl-[protein] + H2O = L-glutamyl-[protein] + ADP-D-ribose + H(+). It carries out the reaction 4-O-(ADP-D-ribosyl)-L-aspartyl-[protein] + H2O = L-aspartyl-[protein] + ADP-D-ribose + H(+). The catalysed reaction is alpha-NAD(+) + H2O = ADP-D-ribose + nicotinamide + H(+). Its function is as follows. Removes ADP-ribose from aspartate and glutamate residues in proteins bearing a single ADP-ribose moiety. Inactive towards proteins bearing poly-ADP-ribose. Catalyzes removal of a phosphate group from ADP-ribose 1''-phosphate (Appr1p), but with low efficiency. In Archaeoglobus fulgidus (strain ATCC 49558 / DSM 4304 / JCM 9628 / NBRC 100126 / VC-16), this protein is ADP-ribose glycohydrolase AF_1521.